Consider the following 102-residue polypeptide: Small ribosomal subunit protein eS24 (102 aa).

Belongs to the eukaryotic ribosomal protein eS24 family.

The polypeptide is Small ribosomal subunit protein eS24 (Methanococcoides burtonii (strain DSM 6242 / NBRC 107633 / OCM 468 / ACE-M)).